Reading from the N-terminus, the 85-residue chain is Exodeoxyribonuclease 7 small subunit (85 aa).

This sequence belongs to the XseB family. As to quaternary structure, heterooligomer composed of large and small subunits.

The protein resides in the cytoplasm. It carries out the reaction Exonucleolytic cleavage in either 5'- to 3'- or 3'- to 5'-direction to yield nucleoside 5'-phosphates.. In terms of biological role, bidirectionally degrades single-stranded DNA into large acid-insoluble oligonucleotides, which are then degraded further into small acid-soluble oligonucleotides. This Mycobacterium bovis (strain ATCC BAA-935 / AF2122/97) protein is Exodeoxyribonuclease 7 small subunit.